We begin with the raw amino-acid sequence, 437 residues long: Probable glycine dehydrogenase (decarboxylating) subunit 1 (437 aa).

Belongs to the GcvP family. N-terminal subunit subfamily. In terms of assembly, the glycine cleavage system is composed of four proteins: P, T, L and H. In this organism, the P 'protein' is a heterodimer of two subunits.

The catalysed reaction is N(6)-[(R)-lipoyl]-L-lysyl-[glycine-cleavage complex H protein] + glycine + H(+) = N(6)-[(R)-S(8)-aminomethyldihydrolipoyl]-L-lysyl-[glycine-cleavage complex H protein] + CO2. Functionally, the glycine cleavage system catalyzes the degradation of glycine. The P protein binds the alpha-amino group of glycine through its pyridoxal phosphate cofactor; CO(2) is released and the remaining methylamine moiety is then transferred to the lipoamide cofactor of the H protein. The sequence is that of Probable glycine dehydrogenase (decarboxylating) subunit 1 from Thermotoga maritima (strain ATCC 43589 / DSM 3109 / JCM 10099 / NBRC 100826 / MSB8).